Here is a 700-residue protein sequence, read N- to C-terminus: Putative proline-rich receptor-like protein kinase PERK6 (700 aa).

A disordered region spans residues 1–180 (MAEGQSPENS…SGGGSNSSGN (180 aa)). The Extracellular segment spans residues 1–186 (MAEGQSPENS…SSGNNEPNTA (186 aa)). 2 stretches are compositionally biased toward pro residues: residues 9–19 (NSPPSPTPPSP) and 29–47 (SPPPSDSSSPSPPAPPPPD). The segment covering 48–137 (DSSNGSPQPP…GNNNDNNNQN (90 aa)) has biased composition (low complexity). Residue N176 is glycosylated (N-linked (GlcNAc...) asparagine). Residues 187-207 (AIVGIVAGAGLLFLVMILFCV) form a helical membrane-spanning segment. Topologically, residues 208 to 700 (CCCRKKKKKH…NNKTTPSRDH (493 aa)) are cytoplasmic. The tract at residues 249-315 (NLSQQYPGSN…GPSVPPPHPS (67 aa)) is disordered. A compositionally biased stretch (low complexity) spans 255-265 (PGSNGNNNWMN). Residues 266–286 (SPPPPPPGSWQPSPPPPPPPV) are compositionally biased toward pro residues. T326 is modified (phosphothreonine). Positions 337 to 615 (FSQSRLLGQG…VRALEGDATL (279 aa)) constitute a Protein kinase domain. ATP is bound by residues 343 to 351 (LGQGGFGYV) and K365. At Y410 the chain carries Phosphotyrosine. The active-site Proton acceptor is the D461. A phosphoserine mark is found at S465 and S494. Phosphothreonine occurs at positions 495 and 500. Y508 bears the Phosphotyrosine mark. Disordered stretches follow at residues 616–642 (DDLSEGGKAGQSSFLGRGSSSDYDSST) and 659–700 (EYGA…SRDH). Over residues 689–700 (ANNNKTTPSRDH) the composition is skewed to polar residues.

This sequence belongs to the protein kinase superfamily. Ser/Thr protein kinase family. In terms of tissue distribution, mostly expressed in flower buds.

The protein resides in the cell membrane. The catalysed reaction is L-seryl-[protein] + ATP = O-phospho-L-seryl-[protein] + ADP + H(+). It carries out the reaction L-threonyl-[protein] + ATP = O-phospho-L-threonyl-[protein] + ADP + H(+). The sequence is that of Putative proline-rich receptor-like protein kinase PERK6 (PERK6) from Arabidopsis thaliana (Mouse-ear cress).